Here is a 168-residue protein sequence, read N- to C-terminus: ATP synthase F(1) complex subunit delta, mitochondrial (168 aa).

Residues 1–22 constitute a mitochondrion transit peptide; it reads MLPSALLRRPGLGRLVRQVRLY. An N6-acetyllysine; alternate mark is found at Lys136 and Lys165. An N6-succinyllysine; alternate mark is found at Lys136 and Lys165.

It belongs to the ATPase epsilon chain family. Component of the ATP synthase complex composed at least of ATP5F1A/subunit alpha, ATP5F1B/subunit beta, ATP5MC1/subunit c (homooctomer), MT-ATP6/subunit a, MT-ATP8/subunit 8, ATP5ME/subunit e, ATP5MF/subunit f, ATP5MG/subunit g, ATP5MK/subunit k, ATP5MJ/subunit j, ATP5F1C/subunit gamma, ATP5F1D/subunit delta, ATP5F1E/subunit epsilon, ATP5PF/subunit F6, ATP5PB/subunit b, ATP5PD/subunit d, ATP5PO/subunit OSCP. ATP synthase complex consists of a soluble F(1) head domain (subunits alpha(3) and beta(3)) - the catalytic core - and a membrane F(0) domain - the membrane proton channel (subunits c, a, 8, e, f, g, k and j). These two domains are linked by a central stalk (subunits gamma, delta, and epsilon) rotating inside the F1 region and a stationary peripheral stalk (subunits F6, b, d, and OSCP). Component of a complex composed at least by ATPIF1, ATP5F1A, ATP5F1B, ATP5F1C AND ATP5F1E.

The protein localises to the mitochondrion. The protein resides in the mitochondrion inner membrane. Subunit delta, of the mitochondrial membrane ATP synthase complex (F(1)F(0) ATP synthase or Complex V) that produces ATP from ADP in the presence of a proton gradient across the membrane which is generated by electron transport complexes of the respiratory chain. ATP synthase complex consist of a soluble F(1) head domain - the catalytic core - and a membrane F(1) domain - the membrane proton channel. These two domains are linked by a central stalk rotating inside the F(1) region and a stationary peripheral stalk. During catalysis, ATP synthesis in the catalytic domain of F(1) is coupled via a rotary mechanism of the central stalk subunits to proton translocation. In vivo, can only synthesize ATP although its ATP hydrolase activity can be activated artificially in vitro. With the central stalk subunit gamma, is essential for the biogenesis of F(1) catalytic part of the ATP synthase complex namely in the formation of F1 assembly intermediate. The polypeptide is ATP synthase F(1) complex subunit delta, mitochondrial (Bos taurus (Bovine)).